A 487-amino-acid polypeptide reads, in one-letter code: Cyclic AMP-dependent transcription factor ATF-2 (487 aa).

The C2H2-type zinc-finger motif lies at 7 to 31 (FLCTAPGCGQRFTNEDHLAVHKHKH). 2 disordered regions span residues 106-132 (EEPS…DEKE) and 267-354 (QHPQ…CRQK). Over residues 298–319 (QQPATSTTETPASPAQPTQQTP) the composition is skewed to low complexity. Residues 328–345 (AANEDPDEKRRKFLERNR) are compositionally biased toward basic and acidic residues. Residues 334-397 (DEKRRKFLER…AQLKQLLLAH (64 aa)) enclose the bZIP domain. The basic motif stretch occupies residues 336 to 356 (KRRKFLERNRAAASRCRQKRK). Positions 362 to 390 (LEKKAEDLSSLNGQLQNEVTLLRNEVAQL) are leucine-zipper. A Nuclear export signal motif is present at residues 387–396 (VAQLKQLLLA). The disordered stretch occupies residues 407 to 487 (KKSGYHTADK…PPSQAQPSGS (81 aa)). Polar residues predominate over residues 425–436 (VPSSPHTEAIQH). The segment covering 437–449 (SSVSTSNGVSSTS) has biased composition (low complexity). Residues 457–468 (SVLTQLADQSSE) are compositionally biased toward polar residues.

The protein belongs to the bZIP family. ATF subfamily. Binds DNA as a dimer and can form a homodimer in the absence of DNA. Can form a heterodimer with JUN. Heterodimerization is essential for its transcriptional activity.

Its subcellular location is the nucleus. The protein resides in the cytoplasm. It localises to the mitochondrion outer membrane. In terms of biological role, transcriptional activator which regulates the transcription of various genes, including those involved in anti-apoptosis, cell growth, and DNA damage response. Dependent on its binding partner, binds to CRE (cAMP response element) consensus sequences (5'-TGACGTCA-3') or to AP-1 (activator protein 1) consensus sequences (5'-TGACTCA-3'). The polypeptide is Cyclic AMP-dependent transcription factor ATF-2 (ATF2) (Gallus gallus (Chicken)).